A 430-amino-acid polypeptide reads, in one-letter code: Glutamine synthetase, chloroplastic/mitochondrial (430 aa).

The N-terminal 45 residues, 1–45 (MAQILAASPTCQMRVPKHSSVIASSSKLWSSVVLKQKKQSNNKVR), are a transit peptide targeting the chloroplast and mitochondrion. The GS beta-grasp domain maps to 77–157 (IIAEYIWIGG…VICDTWTPAG (81 aa)). The disordered stretch occupies residues 97–122 (TIEKPVEDPSELPKWNYDGSSTGQAP). At Ser-106 the chain carries Phosphoserine. In terms of domain architecture, GS catalytic spans 161 to 430 (PTNKRAKAAE…LAAQKLSLNV (270 aa)).

Belongs to the glutamine synthetase family. In terms of assembly, homooctamer. In terms of tissue distribution, expressed in mesophyll and epidermal cells of leaves.

It is found in the plastid. The protein localises to the chloroplast. Its subcellular location is the mitochondrion. The catalysed reaction is L-glutamate + NH4(+) + ATP = L-glutamine + ADP + phosphate + H(+). The light-modulated chloroplast/mitochondrial enzyme, encoded by a nuclear gene and expressed primarily in leaves, is responsible for the reassimilation of the ammonia generated by photorespiration. In Arabidopsis thaliana (Mouse-ear cress), this protein is Glutamine synthetase, chloroplastic/mitochondrial (GLN2).